The primary structure comprises 1399 residues: DNA-directed RNA polymerase subunit beta' (1399 aa).

C70, C72, C85, and C88 together coordinate Zn(2+). Residues D460, D462, and D464 each contribute to the Mg(2+) site. Zn(2+) is bound by residues C814, C888, C895, and C898. The tract at residues 1367 to 1399 is disordered; that stretch reads SERKRQRDLGKPQRVSASEAEAALTEALNSSGN. A compositionally biased stretch (low complexity) spans 1382–1399; the sequence is SASEAEAALTEALNSSGN.

It belongs to the RNA polymerase beta' chain family. The RNAP catalytic core consists of 2 alpha, 1 beta, 1 beta' and 1 omega subunit. When a sigma factor is associated with the core the holoenzyme is formed, which can initiate transcription. It depends on Mg(2+) as a cofactor. Zn(2+) is required as a cofactor.

The enzyme catalyses RNA(n) + a ribonucleoside 5'-triphosphate = RNA(n+1) + diphosphate. Functionally, DNA-dependent RNA polymerase catalyzes the transcription of DNA into RNA using the four ribonucleoside triphosphates as substrates. This chain is DNA-directed RNA polymerase subunit beta', found in Pseudomonas aeruginosa (strain UCBPP-PA14).